A 481-amino-acid polypeptide reads, in one-letter code: Mechanosensory protein 2 (481 aa).

Over residues 1–22 (MSATMSSARNSVVSLSSNGSVK) the composition is skewed to low complexity. Disordered stretches follow at residues 1–67 (MSAT…MATR) and 80–104 (SANS…GNGK). Over residues 27 to 38 (LVSNERSSSIQQ) the composition is skewed to polar residues. Basic and acidic residues predominate over residues 86–104 (DSVKKEKQAEKDVEKGNGK). Residues 115 to 135 (GVCGWILTILSYLLIFFTLPI) traverse the membrane as a helical segment. A compositionally biased stretch (gly residues) spans 403–421 (EGGGGHGHSHGGGGGGLGS). Residues 403–481 (EGGGGHGHSH…SQLDPALLIR (79 aa)) form a disordered region. Residues 433–447 (SGPSTTTTSGRPLLR) show a composition bias toward low complexity. The span at 463-473 (APNQSQTSVSQ) shows a compositional bias: polar residues.

It belongs to the band 7/mec-2 family. Component of a non-voltage-gated amiloride-sensitive cation channel complex (also called the degenerin channel complex) composed of at least the mec-2, mec-4, mec-6 and mec-10 subunits; the complex mediates mechanotransduction in touch cells. Interacts with mec-6 and mec-4.

Its subcellular location is the membrane. Its function is as follows. Subunit of an amiloride-sensitive cation channel (degenerin channel complex) permeable for sodium, potassium, lithium and N-methylglucamine, and required for mechanosensory transduction (touch sensitivity). Positively regulates the activity of the putative mechanosensory transduction channel. May link the mechanosensory channel and the microtubule cytoskeleton of the touch receptor neurons. Required for the function of a set of six touch receptor neurons. The sequence is that of Mechanosensory protein 2 from Caenorhabditis elegans.